Reading from the N-terminus, the 235-residue chain is Endonuclease V (235 aa).

Mg(2+) contacts are provided by D47 and D117.

This sequence belongs to the endonuclease V family. Requires Mg(2+) as cofactor.

The protein resides in the cytoplasm. It catalyses the reaction Endonucleolytic cleavage at apurinic or apyrimidinic sites to products with a 5'-phosphate.. DNA repair enzyme involved in the repair of deaminated bases. Selectively cleaves double-stranded DNA at the second phosphodiester bond 3' to a deoxyinosine leaving behind the intact lesion on the nicked DNA. This is Endonuclease V from Protochlamydia amoebophila (strain UWE25).